A 173-amino-acid chain; its full sequence is ATP synthase subunit d, mitochondrial (173 aa).

The N-terminal 23 residues, 1–23 (MAARSAALKIDWVKVTSSLGLRG), are a transit peptide targeting the mitochondrion.

It belongs to the ATPase d subunit family. F-type ATPases have 2 components, CF(1) - the catalytic core - and CF(0) - the membrane proton channel. In yeast, the dimeric form of ATP synthase consists of 17 polypeptides: alpha, beta, gamma, delta, epsilon, 4 (B), 5 (OSCP), 6 (A), 8, 9 (C), d, E (Tim11), f, g, h, i/j and k.

The protein localises to the mitochondrion inner membrane. In terms of biological role, mitochondrial membrane ATP synthase (F(1)F(0) ATP synthase or Complex V) produces ATP from ADP in the presence of a proton gradient across the membrane which is generated by electron transport complexes of the respiratory chain. F-type ATPases consist of two structural domains, F(1) - containing the extramembraneous catalytic core, and F(0) - containing the membrane proton channel, linked together by a central stalk and a peripheral stalk. During catalysis, ATP synthesis in the catalytic domain of F(1) is coupled via a rotary mechanism of the central stalk subunits to proton translocation. Part of the complex F(0) domain and the peripheric stalk, which acts as a stator to hold the catalytic alpha(3)beta(3) subcomplex and subunit a/ATP6 static relative to the rotary elements. The chain is ATP synthase subunit d, mitochondrial (atp7) from Aspergillus terreus (strain NIH 2624 / FGSC A1156).